The following is a 557-amino-acid chain: Intraflagellar transport protein 56 (557 aa).

Residues 1–30 (MLLSRMKPAVGGEASTSSNEKKRKNKSKKI) are disordered. The segment covering 21 to 30 (KKRKNKSKKI) has biased composition (basic residues). TPR repeat units lie at residues 60-93 (EHAD…PDCP), 95-128 (DVWV…LQNR), 154-187 (TEDQ…NREF), and 471-504 (ANDC…EGKR).

Belongs to the IFT56 family. In terms of assembly, component of the IFT complex B.

It is found in the cell projection. Its subcellular location is the cilium. Component of the intraflagellar transport (IFT) complex B required for transport of proteins in the motile cilium. Required for transport of specific ciliary cargo proteins related to motility, while it is neither required for IFT complex B assembly or motion nor for cilium assembly. Plays a key role in maintaining the integrity of the IFT complex B and the proper ciliary localization of the IFT complex B components. Essential for maintaining proper microtubule organization within the ciliary axoneme. The sequence is that of Intraflagellar transport protein 56 from Danio rerio (Zebrafish).